Reading from the N-terminus, the 340-residue chain is Phenylalanine--tRNA ligase alpha subunit (340 aa).

Position 255 (Glu255) interacts with Mg(2+).

It belongs to the class-II aminoacyl-tRNA synthetase family. Phe-tRNA synthetase alpha subunit type 1 subfamily. As to quaternary structure, tetramer of two alpha and two beta subunits. The cofactor is Mg(2+).

It is found in the cytoplasm. It carries out the reaction tRNA(Phe) + L-phenylalanine + ATP = L-phenylalanyl-tRNA(Phe) + AMP + diphosphate + H(+). This chain is Phenylalanine--tRNA ligase alpha subunit, found in Desulfitobacterium hafniense (strain DSM 10664 / DCB-2).